The sequence spans 429 residues: Histidine--tRNA ligase (429 aa).

The protein belongs to the class-II aminoacyl-tRNA synthetase family. In terms of assembly, homodimer.

It is found in the cytoplasm. It catalyses the reaction tRNA(His) + L-histidine + ATP = L-histidyl-tRNA(His) + AMP + diphosphate + H(+). The chain is Histidine--tRNA ligase from Chlorobium phaeobacteroides (strain DSM 266 / SMG 266 / 2430).